The following is a 99-amino-acid chain: MNPDNYLYLSALLFTIGAAGVLLRRNVIVVFMCVELMLNAANLAFVAFSRMHGQLDGQVVAFFTMVVAACEVVIGLAIIMTIYRARRSASVDDANLLKH.

Helical transmembrane passes span 3 to 23 (PDNYLYLSALLFTIGAAGVLL), 28 to 48 (IVVFMCVELMLNAANLAFVAF), and 59 to 79 (VVAFFTMVVAACEVVIGLAII).

This sequence belongs to the complex I subunit 4L family. As to quaternary structure, NDH-1 is composed of 14 different subunits. Subunits NuoA, H, J, K, L, M, N constitute the membrane sector of the complex.

Its subcellular location is the cell membrane. The catalysed reaction is a quinone + NADH + 5 H(+)(in) = a quinol + NAD(+) + 4 H(+)(out). Functionally, NDH-1 shuttles electrons from NADH, via FMN and iron-sulfur (Fe-S) centers, to quinones in the respiratory chain. The immediate electron acceptor for the enzyme in this species is believed to be a menaquinone. Couples the redox reaction to proton translocation (for every two electrons transferred, four hydrogen ions are translocated across the cytoplasmic membrane), and thus conserves the redox energy in a proton gradient. The sequence is that of NADH-quinone oxidoreductase subunit K from Mycobacterium sp. (strain JLS).